The sequence spans 272 residues: Putative pyruvate, phosphate dikinase regulatory protein (272 aa).

147-154 is an ADP binding site; sequence GLSRTSKT.

The protein belongs to the pyruvate, phosphate/water dikinase regulatory protein family. PDRP subfamily.

It carries out the reaction N(tele)-phospho-L-histidyl/L-threonyl-[pyruvate, phosphate dikinase] + ADP = N(tele)-phospho-L-histidyl/O-phospho-L-threonyl-[pyruvate, phosphate dikinase] + AMP + H(+). It catalyses the reaction N(tele)-phospho-L-histidyl/O-phospho-L-threonyl-[pyruvate, phosphate dikinase] + phosphate + H(+) = N(tele)-phospho-L-histidyl/L-threonyl-[pyruvate, phosphate dikinase] + diphosphate. In terms of biological role, bifunctional serine/threonine kinase and phosphorylase involved in the regulation of the pyruvate, phosphate dikinase (PPDK) by catalyzing its phosphorylation/dephosphorylation. The polypeptide is Putative pyruvate, phosphate dikinase regulatory protein (Clostridium botulinum (strain Alaska E43 / Type E3)).